Here is a 347-residue protein sequence, read N- to C-terminus: D-alanine--D-alanine ligase (347 aa).

Residues 131–333 (KRVLESAGIA…YPELIERLVD (203 aa)) enclose the ATP-grasp domain. Residue 161-216 (EEKLAYPVFTKPSNMGSSVGISKSENQEELRQALKLAFRYDSRVLVEQGVNAREIE) participates in ATP binding. Mg(2+) is bound by residues Asp-287, Glu-300, and Asn-302.

The protein belongs to the D-alanine--D-alanine ligase family. The cofactor is Mg(2+). Mn(2+) serves as cofactor.

The protein resides in the cytoplasm. The catalysed reaction is 2 D-alanine + ATP = D-alanyl-D-alanine + ADP + phosphate + H(+). It participates in cell wall biogenesis; peptidoglycan biosynthesis. Its function is as follows. Cell wall formation. The sequence is that of D-alanine--D-alanine ligase from Streptococcus pneumoniae serotype 19F (strain G54).